The following is a 563-amino-acid chain: GTPase Obg (563 aa).

Residues 2–168 (SDFVDRVTVH…RDVILELKSI (167 aa)) form the Obg domain. The OBG-type G domain maps to 169 to 349 (ADVALVGFPS…LNFALSALVH (181 aa)). GTP contacts are provided by residues 175–182 (GFPSAGKS), 200–204 (FTTLV), 221–224 (DVPG), 301–304 (NKID), and 330–332 (STA). Positions 182 and 202 each coordinate Mg(2+). One can recognise an OCT domain in the interval 383–469 (DEGGSALEFT…ARMVEFDWDP (87 aa)). The disordered stretch occupies residues 529–563 (RKAGHWADPTVDDDRHDETSLFGHGESSEDGETEE).

This sequence belongs to the TRAFAC class OBG-HflX-like GTPase superfamily. OBG GTPase family. In terms of assembly, monomer. The cofactor is Mg(2+).

It is found in the cytoplasm. Its function is as follows. An essential GTPase which binds GTP, GDP and possibly (p)ppGpp with moderate affinity, with high nucleotide exchange rates and a fairly low GTP hydrolysis rate. Plays a role in control of the cell cycle, stress response, ribosome biogenesis and in those bacteria that undergo differentiation, in morphogenesis control. The polypeptide is GTPase Obg (Bifidobacterium longum (strain DJO10A)).